The sequence spans 244 residues: Membrane-spanning 4-domains subfamily A member 6B (244 aa).

Residues 1-46 (MIPQVVTSETVAMISPNGMSLPQTDKPQPFHQWQDSLKKHLKAEIK) lie on the Cytoplasmic side of the membrane. Residues 47 to 67 (VMAAIQIMCAVMVLSLGIILA) traverse the membrane as a helical segment. At 68–84 (SVPSNLHFTSVFSVLLK) the chain is on the extracellular side. Residues 85-105 (SGYPFIGALFFIVSGILSIVT) form a helical membrane-spanning segment. Residues 106-121 (ETKSTKILVDSSLTLN) lie on the Cytoplasmic side of the membrane. A helical membrane pass occupies residues 122 to 142 (ILSVSFAFMGIIIISVSLAGL). Over 143–176 (HPASEQCLQSKELRPTEYHYYQFLDRNECFAAKS) the chain is Extracellular. A helical membrane pass occupies residues 177–197 (VLAGVFSLMLISTMLELGLAV). The Cytoplasmic portion of the chain corresponds to 198 to 244 (LTAMLWWKQSHSNIPGNVMFLPHSSNNDSNMESKVLCNPSYEEQLVC).

This sequence belongs to the MS4A family. In terms of tissue distribution, expressed at high levels in thymus, spleen, and peripheral lymph nodes, with less abundant levels in non-lymphoid tissues.

It is found in the membrane. Its function is as follows. May be involved in signal transduction as a component of a multimeric receptor complex. In Mus musculus (Mouse), this protein is Membrane-spanning 4-domains subfamily A member 6B (Ms4a6b).